A 249-amino-acid polypeptide reads, in one-letter code: O-methyltransferase adaD (249 aa).

Residues methionine 1–threonine 15 are compositionally biased toward low complexity. Residues methionine 1–glutamine 26 form a disordered region.

This sequence belongs to the methyltransferase superfamily.

The catalysed reaction is 2-acetyl-3,4a,8,10,11,12a-hexahydroxy-1,4,4a,5,12,12a-hexahydrotetracene-1,12-dione + S-adenosyl-L-methionine = TAN-1612 + S-adenosyl-L-homocysteine + H(+). It participates in secondary metabolite biosynthesis. Its function is as follows. O-methyltransferase; part of the gene cluster that mediates the biosynthesis of the linear tetracyclic TAN-1612 neuropeptide Y receptor antagonist. The decaketide backbone of TAN-1612 is synthesized by the non-reducing polyketide synthase adaA via condensation of one acetyl-CoA starter unit with 9 malonyl-CoA units. The FAD-dependent monooxygenase adaC then performs hydroxylation at C2 while the polaketide chain is still attached to the NRPKS adaA. The alpha-hydroxylation step at C2 appears to be crucial for the following C18-C1 Claisen cyclization and release of the C9-hydroxyl version of TAN-1612 from the NRPKS adaA, two steps performed by the lactamase-like protein adaB. Finally, the O-methyltransferase adaD performs the C9 O-methylation to complete the biosynthesis of TAN-1612. The polypeptide is O-methyltransferase adaD (Aspergillus niger).